We begin with the raw amino-acid sequence, 142 residues long: Transcriptional regulator MraZ (142 aa).

SpoVT-AbrB domains follow at residues 5–47 (EYPY…PLAS) and 76–119 (ANKA…NPER).

The protein belongs to the MraZ family. As to quaternary structure, forms oligomers.

The protein resides in the cytoplasm. It is found in the nucleoid. This chain is Transcriptional regulator MraZ, found in Deinococcus geothermalis (strain DSM 11300 / CIP 105573 / AG-3a).